Here is a 32-residue protein sequence, read N- to C-terminus: ASFSVVGDIMGTSMQNLHQLLQMPFGCGEQNM.

A cross-link (isoglutamyl cysteine thioester (Cys-Gln)) is located at residues 27–30; it reads CGEQ.

This sequence belongs to the protease inhibitor I39 (alpha-2-macroglobulin) family. In terms of assembly, homotetramer, which consists of two pairs of disulfide-linked chains.

It localises to the secreted. Functionally, is able to inhibit all four classes of proteinases by a unique 'trapping' mechanism. This protein has a peptide stretch, called the 'bait region' which contains specific cleavage sites for different proteinases. When a proteinase cleaves the bait region, a conformational change is induced in the protein which traps the proteinase. The entrapped enzyme remains active against low molecular weight substrates (activity against high molecular weight substrates is greatly reduced). Following cleavage in the bait region a thioester bond is hydrolyzed and mediates the covalent binding of the protein to the proteinase. This Anas platyrhynchos (Mallard) protein is Ovostatin.